The following is a 290-amino-acid chain: 4-diphosphocytidyl-2-C-methyl-D-erythritol kinase (290 aa).

Residue Lys10 is part of the active site. ATP is bound at residue 95–105 (PVAAGLAGGSS). The active site involves Asp137.

It belongs to the GHMP kinase family. IspE subfamily.

The catalysed reaction is 4-CDP-2-C-methyl-D-erythritol + ATP = 4-CDP-2-C-methyl-D-erythritol 2-phosphate + ADP + H(+). Its pathway is isoprenoid biosynthesis; isopentenyl diphosphate biosynthesis via DXP pathway; isopentenyl diphosphate from 1-deoxy-D-xylulose 5-phosphate: step 3/6. In terms of biological role, catalyzes the phosphorylation of the position 2 hydroxy group of 4-diphosphocytidyl-2C-methyl-D-erythritol. In Geobacillus kaustophilus (strain HTA426), this protein is 4-diphosphocytidyl-2-C-methyl-D-erythritol kinase.